A 455-amino-acid chain; its full sequence is Cysteinylglycine-S-conjugate dipeptidase (455 aa).

His92 lines the Zn(2+) pocket. Residue Asp94 is part of the active site. A Zn(2+)-binding site is contributed by Asp125. Residue Glu158 is the Proton acceptor of the active site. The Zn(2+) site is built by Glu159, Glu163, and His428.

This sequence belongs to the peptidase M20F family. It depends on Zn(2+) as a cofactor.

The enzyme catalyses an S-substituted L-cysteinylglycine + H2O = an S-substituted L-cysteine + glycine. The catalysed reaction is S-(1-hydroxy-3-methylhexan-3-yl)-L-cysteinylglycine + H2O = S-(1-hydroxy-3-methylhexan-3-yl)-L-cysteine + glycine. It catalyses the reaction S-benzyl-L-cysteinylglycine + H2O = S-benzyl-L-cysteine + glycine. In terms of biological role, metallopeptidase that hydrolyzes the Cys-Gly bond of Cys-Gly-S-conjugates. Involved in the formation of the human body odorant 3-methyl-3-sulfanylhexan-1-ol (3M3SH) from odorless axilla secretions. Catalyzes the hydrolysis of the Cys-Gly bond of the Cys-Gly-S-conjugate of 3M3SH, a key precursor secreted by apocrine glands in human axilla skin. The Cys-S-conjugate obtained is then cleaved by the Cys-S-conjugate beta-lyase MetC, which finally releases 3M3SH. This is Cysteinylglycine-S-conjugate dipeptidase from Corynebacterium striatum.